Consider the following 488-residue polypeptide: Probable glycine dehydrogenase (decarboxylating) subunit 2 (488 aa).

Lys273 is modified (N6-(pyridoxal phosphate)lysine).

It belongs to the GcvP family. C-terminal subunit subfamily. In terms of assembly, the glycine cleavage system is composed of four proteins: P, T, L and H. In this organism, the P 'protein' is a heterodimer of two subunits. It depends on pyridoxal 5'-phosphate as a cofactor.

It carries out the reaction N(6)-[(R)-lipoyl]-L-lysyl-[glycine-cleavage complex H protein] + glycine + H(+) = N(6)-[(R)-S(8)-aminomethyldihydrolipoyl]-L-lysyl-[glycine-cleavage complex H protein] + CO2. In terms of biological role, the glycine cleavage system catalyzes the degradation of glycine. The P protein binds the alpha-amino group of glycine through its pyridoxal phosphate cofactor; CO(2) is released and the remaining methylamine moiety is then transferred to the lipoamide cofactor of the H protein. This Halalkalibacterium halodurans (strain ATCC BAA-125 / DSM 18197 / FERM 7344 / JCM 9153 / C-125) (Bacillus halodurans) protein is Probable glycine dehydrogenase (decarboxylating) subunit 2.